Consider the following 472-residue polypeptide: Clampless protein 1 (472 aa).

2 N-linked (GlcNAc...) asparagine glycosylation sites follow: N70 and N296.

Required for developmental progression after cells of opposite mating types fuse with one another, essential for processes common to both dikaryotic filament formation and monokaryotic fruiting. A direct target for transcription factors Sxi1-alpha and Sxi2-a. This Cryptococcus neoformans var. neoformans serotype D (strain B-3501A) (Filobasidiella neoformans) protein is Clampless protein 1.